Consider the following 1310-residue polypeptide: Vacuolating cytotoxin autotransporter (1310 aa).

Residues 1 to 30 form the signal peptide; the sequence is MEIQQTHRKINRPIISLALVGVLMGTELGA. The disordered stretch occupies residues 339–364; the sequence is PEGGYESKTKDNPQNNPKNDAQKTEI. A compositionally biased stretch (polar residues) spans 350–364; that stretch reads NPQNNPKNDAQKTEI. Residues 1038–1310 form the Autotransporter domain; sequence KYEKPTNVWA…ASNLGMRYSF (273 aa).

It is found in the periplasm. Its subcellular location is the secreted. The protein resides in the cell surface. It localises to the cell outer membrane. Its function is as follows. Induces vacuolation of eukaryotic cells. Causes ulceration and gastric lesions. The protein is Vacuolating cytotoxin autotransporter (vacA) of Helicobacter pylori (Campylobacter pylori).